The sequence spans 865 residues: Aconitate hydratase B (865 aa).

Residues Arg191, 244 to 246, 414 to 416, and Ser498 contribute to the substrate site; these read SSR and QDT. [4Fe-4S] cluster contacts are provided by Cys710, Cys769, and Cys772. Residues Arg791 and Arg796 each contribute to the substrate site.

This sequence belongs to the aconitase/IPM isomerase family. Monomer. AcnB can also form a homodimer. The monomer-homodimer transition is dependent on iron availability and the carboxymethylation of C-273 inhibits the dimer formation. [4Fe-4S] cluster serves as cofactor.

The catalysed reaction is citrate = D-threo-isocitrate. It carries out the reaction (2S,3R)-3-hydroxybutane-1,2,3-tricarboxylate = 2-methyl-cis-aconitate + H2O. The protein operates within organic acid metabolism; propanoate degradation. It functions in the pathway carbohydrate metabolism; tricarboxylic acid cycle; isocitrate from oxaloacetate: step 2/2. Involved in the catabolism of short chain fatty acids (SCFA) via the tricarboxylic acid (TCA)(acetyl degradation route) and the 2-methylcitrate cycle I (propionate degradation route). Catalyzes the reversible isomerization of citrate to isocitrate via cis-aconitate. Also catalyzes the hydration of 2-methyl-cis-aconitate to yield (2R,3S)-2-methylisocitrate. The apo form of AcnB functions as a RNA-binding regulatory protein. During oxidative stress inactive AcnB apo-enzyme without iron sulfur clusters binds the acnB mRNA 3' UTRs (untranslated regions), stabilizes acnB mRNA and increases AcnB synthesis, thus mediating a post-transcriptional positive autoregulatory switch. AcnB also decreases the stability of the sodA transcript. This Escherichia coli (strain K12) protein is Aconitate hydratase B.